The following is a 337-amino-acid chain: Sorting nexin-15 (337 aa).

Residues 1–130 (MSRQAKDDFL…EFFRGGEVTR (130 aa)) form the PX domain. Residues Arg51, Ser53, Arg87, and Arg96 each contribute to the a 1,2-diacyl-sn-glycero-3-phospho-(1D-myo-inositol-3-phosphate) site. Residue Arg105 is modified to Omega-N-methylarginine. The interval 133 to 156 (EVSRDLRILPPPLIPTPPPDEARL) is disordered. Positions 141 to 151 (LPPPLIPTPPP) are enriched in pro residues. Phosphoserine is present on residues Ser201 and Ser227. The segment at 244 to 270 (LDQEPWEPGGQEEEEAEDGEPAPAYLG) is disordered. The segment covering 253-263 (GQEEEEAEDGE) has biased composition (acidic residues). The MIT domain occupies 265–337 (APAYLGQATE…RAEMLHTHLP (73 aa)).

It belongs to the sorting nexin family. As to quaternary structure, homodimer. Interacts with SNX1, SNX2 and SNX4.

Its subcellular location is the cytoplasm. The protein resides in the membrane. The protein localises to the cytoplasmic vesicle membrane. In terms of biological role, may be involved in several stages of intracellular trafficking. Overexpression of SNX15 disrupts the normal trafficking of proteins from the plasma membrane to recycling endosomes or the TGN. This is Sorting nexin-15 (Snx15) from Mus musculus (Mouse).